Consider the following 294-residue polypeptide: Nucleotide-binding protein CPF_0343 (294 aa).

Residue 8-15 (GLSGAGKT) participates in ATP binding. 59–62 (DIRG) lines the GTP pocket.

This sequence belongs to the RapZ-like family.

Functionally, displays ATPase and GTPase activities. In Clostridium perfringens (strain ATCC 13124 / DSM 756 / JCM 1290 / NCIMB 6125 / NCTC 8237 / Type A), this protein is Nucleotide-binding protein CPF_0343.